We begin with the raw amino-acid sequence, 391 residues long: 3-ketoacyl-CoA thiolase (391 aa).

The active-site Acyl-thioester intermediate is the C95. Active-site proton acceptor residues include H347 and C377.

This sequence belongs to the thiolase-like superfamily. Thiolase family. Heterotetramer of two alpha chains (FadB) and two beta chains (FadA).

The protein resides in the cytoplasm. It carries out the reaction an acyl-CoA + acetyl-CoA = a 3-oxoacyl-CoA + CoA. The protein operates within lipid metabolism; fatty acid beta-oxidation. Catalyzes the final step of fatty acid oxidation in which acetyl-CoA is released and the CoA ester of a fatty acid two carbons shorter is formed. The polypeptide is 3-ketoacyl-CoA thiolase (Stutzerimonas stutzeri (strain A1501) (Pseudomonas stutzeri)).